Here is a 353-residue protein sequence, read N- to C-terminus: Polyprenal reductase 2 (353 aa).

Helical transmembrane passes span 11-31 (PLLCFAWIAATLPIIAAALPI), 78-98 (FMHFYVVGVLATTILLLAIWF), 175-195 (MHIVGYLTGLFYYVAAPLSLA), 234-254 (PLLKLGWTQWIGAVIFIWGSL), 291-308 (YLAELVIYFGMLVASGAE), and 313-335 (WFLFIFLITNLSFAAVETYNWYL).

This sequence belongs to the steroid 5-alpha reductase family. Polyprenal reductase subfamily.

It is found in the cell membrane. The catalysed reaction is a di-trans,poly-cis-dolichal + NADP(+) = a di-trans,poly-cis-polyprenal + NADPH + H(+). It functions in the pathway protein modification; protein glycosylation. Its function is as follows. Plays a key role in early steps of protein N-linked glycosylation by being involved in the conversion of polyprenol into dolichol. Acts as a polyprenal reductase that mediates the reduction of polyprenal into dolichal in a NADP-dependent mechanism. Dolichols are required for the synthesis of dolichol-linked monosaccharides and the oligosaccharide precursor used for N-glycosylation. This chain is Polyprenal reductase 2, found in Oryza sativa subsp. indica (Rice).